Reading from the N-terminus, the 223-residue chain is Deoxyribose-phosphate aldolase (223 aa).

The active-site Proton donor/acceptor is the D89. The active-site Schiff-base intermediate with acetaldehyde is K152. Residue K181 is the Proton donor/acceptor of the active site.

It belongs to the DeoC/FbaB aldolase family. DeoC type 1 subfamily.

The protein localises to the cytoplasm. The catalysed reaction is 2-deoxy-D-ribose 5-phosphate = D-glyceraldehyde 3-phosphate + acetaldehyde. Its pathway is carbohydrate degradation; 2-deoxy-D-ribose 1-phosphate degradation; D-glyceraldehyde 3-phosphate and acetaldehyde from 2-deoxy-alpha-D-ribose 1-phosphate: step 2/2. Catalyzes a reversible aldol reaction between acetaldehyde and D-glyceraldehyde 3-phosphate to generate 2-deoxy-D-ribose 5-phosphate. This chain is Deoxyribose-phosphate aldolase, found in Listeria monocytogenes serotype 4b (strain F2365).